Here is a 182-residue protein sequence, read N- to C-terminus: ATP-dependent protease subunit HslV (182 aa).

Residue Thr-9 is part of the active site. Na(+)-binding residues include Ala-167, Cys-170, and Thr-173.

It belongs to the peptidase T1B family. HslV subfamily. A double ring-shaped homohexamer of HslV is capped on each side by a ring-shaped HslU homohexamer. The assembly of the HslU/HslV complex is dependent on binding of ATP.

The protein resides in the cytoplasm. It catalyses the reaction ATP-dependent cleavage of peptide bonds with broad specificity.. With respect to regulation, allosterically activated by HslU binding. Its function is as follows. Protease subunit of a proteasome-like degradation complex believed to be a general protein degrading machinery. In Enterococcus faecalis (strain ATCC 700802 / V583), this protein is ATP-dependent protease subunit HslV.